The sequence spans 120 residues: NAD(P)H-quinone oxidoreductase subunit 3 (120 aa).

The next 3 helical transmembrane spans lie at 6–26, 64–84, and 89–109; these read GYDA…LALV, MFAL…PWAV, and LGLL…VALA.

This sequence belongs to the complex I subunit 3 family. In terms of assembly, NDH-1 can be composed of about 15 different subunits; different subcomplexes with different compositions have been identified which probably have different functions.

It is found in the cellular thylakoid membrane. It carries out the reaction a plastoquinone + NADH + (n+1) H(+)(in) = a plastoquinol + NAD(+) + n H(+)(out). It catalyses the reaction a plastoquinone + NADPH + (n+1) H(+)(in) = a plastoquinol + NADP(+) + n H(+)(out). In terms of biological role, NDH-1 shuttles electrons from an unknown electron donor, via FMN and iron-sulfur (Fe-S) centers, to quinones in the respiratory and/or the photosynthetic chain. The immediate electron acceptor for the enzyme in this species is believed to be plastoquinone. Couples the redox reaction to proton translocation, and thus conserves the redox energy in a proton gradient. Cyanobacterial NDH-1 also plays a role in inorganic carbon-concentration. In Prochlorococcus marinus (strain SARG / CCMP1375 / SS120), this protein is NAD(P)H-quinone oxidoreductase subunit 3.